The chain runs to 509 residues: uncharacterized protein (509 aa).

4 disordered regions span residues 112–131 (KSKQ…SENE), 152–325 (NKNT…NNDS), 365–457 (NNIN…PNQG), and 488–509 (AQQP…VQQQ). Composition is skewed to low complexity over residues 116 to 127 (NNNGFNGHKGNF) and 153 to 184 (KNTI…SNTT). A compositionally biased stretch (acidic residues) spans 189–217 (YSDDDYQNEQNEFEEEDYDSNDDENDSHD). Residues 228 to 242 (KTTNQLKRKVSSSFT) show a composition bias toward polar residues. Composition is skewed to low complexity over residues 243 to 325 (NNNY…NNDS) and 365 to 397 (NNIN…TNND). The segment covering 398–422 (LKSSNHSNYDFNYNTNERLSHSPIQ) has biased composition (polar residues). The segment covering 423 to 442 (THSSSNNSTPSNQSPTFPSN) has biased composition (low complexity). Polar residues-rich tracts occupy residues 443–457 (YISQ…PNQG) and 496–509 (NNNV…VQQQ).

This is an uncharacterized protein from Dictyostelium discoideum (Social amoeba).